Reading from the N-terminus, the 374-residue chain is Proteasomal ubiquitin receptor ADRM1 homolog (374 aa).

In terms of domain architecture, Pru spans 13–131 (SSSGHIVEFK…KKVTDALNKP (119 aa)). Disordered regions lie at residues 126-166 (DALN…MNAP), 187-223 (SDTL…NPLS), and 334-374 (ANLT…MDVD). Composition is skewed to polar residues over residues 141 to 163 (SAGS…SSDM) and 209 to 223 (PSTN…NPLS). The 108-residue stretch at 239 to 346 (SQKKEVAVSL…TKAEGGEDAA (108 aa)) folds into the DEUBAD domain. Over residues 354 to 368 (DATREPEPKRNRPDN) the composition is skewed to basic and acidic residues.

Belongs to the ADRM1 family. As to quaternary structure, component of the 19S proteasome regulatory particle complex. The 26S proteasome consists of a 20S core particle (CP) and two 19S regulatory subunits (RP). Interacts with deubiquitinase ubh-4.

The protein localises to the cytoplasm. It localises to the nucleus. Its function is as follows. May function as a proteasomal ubiquitin receptor. May promote the deubiquitinating activity associated with the 26S proteasome. The polypeptide is Proteasomal ubiquitin receptor ADRM1 homolog (Caenorhabditis elegans).